Reading from the N-terminus, the 313-residue chain is MLDNVLRIATRQSPLALWQAHYVKDKLMASHPGLVVELVPMVTRGDVILDTPLAKVGGKGLFVKELEVALLENRADIAVHSMKDVPVEFPQGLGLVTICEREDPRDAFVSNTYDSLDALPAGSIVGTSSLRRQCQLAERRPDLIIRSLRGNVGTRLSKLDNGEYDAIILAVAGLKRLGLESRIRAALPPEISLPAVGQGAVGIECRLDDARTRELLAALNHHETALRVTAERAMNTRLEGGCQVPIGSYAELIDGEIWLRALVGAPDGSQIIRGERRGAPQDAEQMGISLAEELLNNGAREILAEVYNGDAPA.

At C242 the chain carries S-(dipyrrolylmethanemethyl)cysteine.

It belongs to the HMBS family. In terms of assembly, monomer. It depends on dipyrromethane as a cofactor.

The catalysed reaction is 4 porphobilinogen + H2O = hydroxymethylbilane + 4 NH4(+). Its pathway is porphyrin-containing compound metabolism; protoporphyrin-IX biosynthesis; coproporphyrinogen-III from 5-aminolevulinate: step 2/4. Functionally, tetrapolymerization of the monopyrrole PBG into the hydroxymethylbilane pre-uroporphyrinogen in several discrete steps. This chain is Porphobilinogen deaminase, found in Escherichia coli O6:H1 (strain CFT073 / ATCC 700928 / UPEC).